We begin with the raw amino-acid sequence, 271 residues long: Urease accessory protein UreD (271 aa).

It belongs to the UreD family. As to quaternary structure, ureD, UreF and UreG form a complex that acts as a GTP-hydrolysis-dependent molecular chaperone, activating the urease apoprotein by helping to assemble the nickel containing metallocenter of UreC. The UreE protein probably delivers the nickel.

The protein resides in the cytoplasm. In terms of biological role, required for maturation of urease via the functional incorporation of the urease nickel metallocenter. This Azorhizobium caulinodans (strain ATCC 43989 / DSM 5975 / JCM 20966 / LMG 6465 / NBRC 14845 / NCIMB 13405 / ORS 571) protein is Urease accessory protein UreD.